A 568-amino-acid polypeptide reads, in one-letter code: Involucrin (568 aa).

Disordered stretches follow at residues 23–499 and 517–568; these read CSPA…EKEL and RKKH…HEVQ. Positions 25–36 are enriched in low complexity; that stretch reads PAQTQQEQTKQP. Basic and acidic residues predominate over residues 49–77; that stretch reads TQEKGFPKHEEKEANPVKDLPEQESEHHQ. The segment covering 78 to 88 has biased composition (low complexity); that stretch reads QPGPQKQQLQV. Residues 89–106 are compositionally biased toward basic and acidic residues; sequence KKPEQELQEQELHSEKQP. Composition is skewed to low complexity over residues 107-121, 133-154, and 172-181; these read QEPQ…QQQR, HQQP…QDVL, and PELPLGQQQK. Residues 193-213 are compositionally biased toward basic and acidic residues; it reads KQQKLHLVERHQEPQEQELHH. Residues 217–232 show a composition bias toward low complexity; the sequence is QKQQQPQEQELQLVQH. Basic and acidic residues-rich tracts occupy residues 266–333 and 345–456; these read ESHE…HQET and KPHE…HLGK. The segment covering 457–467 has biased composition (low complexity); sequence QQEQQIEYEGY. At Ser472 the chain carries Phosphoserine. Basic and acidic residues-rich tracts occupy residues 478–499, 517–532, and 551–568; these read KQEK…EKEL, RKKH…EKQI, and VKED…HEVQ.

It belongs to the involucrin family. As to quaternary structure, directly or indirectly cross-linked to cornifelin (CNFN). Substrate of transglutaminase. Specific glutamines or lysines are cross-linked to keratins, desmoplakin and to inter involucrin molecules. In terms of tissue distribution, keratinocytes of epidermis and other stratified squamous epithelia.

The protein resides in the cytoplasm. Part of the insoluble cornified cell envelope (CE) of stratified squamous epithelia. This is Involucrin (Ivl) from Rattus norvegicus (Rat).